The primary structure comprises 253 residues: tRNA pseudouridine synthase A (253 aa).

Aspartate 53 acts as the Nucleophile in catalysis. Tyrosine 112 contacts substrate.

It belongs to the tRNA pseudouridine synthase TruA family. Homodimer.

The catalysed reaction is uridine(38/39/40) in tRNA = pseudouridine(38/39/40) in tRNA. Functionally, formation of pseudouridine at positions 38, 39 and 40 in the anticodon stem and loop of transfer RNAs. This is tRNA pseudouridine synthase A from Lactococcus lactis subsp. lactis (strain IL1403) (Streptococcus lactis).